A 284-amino-acid chain; its full sequence is MSASLIKGSDVAKEIRSDLQKDVEDLKSQGVTPHLAVVLVGEDSASQTYVNMKEKTAGKVGIESTVKRLPTNVEEDELLRLIDELNKDDSVHGILVQLPLPYHIDEYKILNAIDQYKDVDSFHPVNVGNLTIGQKRFTPCTPAGIMKLLDSIDYDLNGKHAVVLGRSNIVGKPISLLLLERNATVSICHSRTKDLTEMTKSADLLIVAVGRPEIVTGKMIKPGAVVIDVGVNKVDDKLIGDVEFESAKEVAGWITPVPGGVGPMTITMLLNNTIEAARRCLNEQ.

Residues 165–167, serine 190, and valine 231 each bind NADP(+); that span reads GRS.

This sequence belongs to the tetrahydrofolate dehydrogenase/cyclohydrolase family. As to quaternary structure, homodimer.

It catalyses the reaction (6R)-5,10-methylene-5,6,7,8-tetrahydrofolate + NADP(+) = (6R)-5,10-methenyltetrahydrofolate + NADPH. The catalysed reaction is (6R)-5,10-methenyltetrahydrofolate + H2O = (6R)-10-formyltetrahydrofolate + H(+). It participates in one-carbon metabolism; tetrahydrofolate interconversion. In terms of biological role, catalyzes the oxidation of 5,10-methylenetetrahydrofolate to 5,10-methenyltetrahydrofolate and then the hydrolysis of 5,10-methenyltetrahydrofolate to 10-formyltetrahydrofolate. The protein is Bifunctional protein FolD of Natranaerobius thermophilus (strain ATCC BAA-1301 / DSM 18059 / JW/NM-WN-LF).